A 496-amino-acid chain; its full sequence is Mothers against decapentaplegic homolog 6 (496 aa).

Positions 1 to 15 (MFRSKRSGLVRRLWR) are enriched in basic residues. Disordered stretches follow at residues 1–116 (MFRS…PGWL) and 136–156 (GAPR…AGGG). R75 and R82 each carry dimethylated arginine; alternate. Residues R75 and R82 each carry the omega-N-methylarginine; alternate modification. The region spanning 148–275 (AALEPAGGGR…FSRLCGPESP (128 aa)) is the MH1 domain. A Glycyl lysine isopeptide (Lys-Gly) (interchain with G-Cter in ubiquitin) cross-link involves residue K173. Zn(2+) contacts are provided by C205, C247, C260, and H265. An MH2 domain is found at 331-496 (WCSVAYWEHR…WLEILLNNPR (166 aa)). A Phosphoserine; by PRKX; in vitro modification is found at S435.

The protein belongs to the dwarfin/SMAD family. In terms of assembly, interacts with NEDD4L. Interacts with WWP1. Interacts with STAMBP and PRKX. Interacts with RNF111 and AXIN1. Interacts with TGF-beta type I receptor superfamily members, including ACVR1B, BMPR1B and TGFBR1. In response to BMP2, but not to TGFB treatment, interacts with SMAD1, but not with SMAD2, nor with SMAD4; this interaction may inhibit SMAD1 binding to SMAD4. Interacts with HOXC8 and HOXC9. Interacts with PELI1; this interaction interferes with PELI1 complex formation with TRAF6, IRAK1, IRAK4 and MYD88 in response to IL1B and hence negatively regulates IL1R-TLR signaling. Interacts with TSC22D1/TSC-22. In terms of processing, phosphorylated by BMP type 1 receptor kinase and by PRKX. Post-translationally, monoubiquitinated at Lys-173 by the E2/E3 hybrid ubiquitin-protein ligase UBE2O, leading to reduced binding affinity for the activated BMP type I receptor ACVR1/ALK2, thereby enhancing BMP7 and regulating adipocyte differentiation. Ubiquitinated by WWP1. Ubiquitinated by ARK2C, promoting proteasomal degradation, leading to enhance the BMP-Smad signaling. Arginine methylation by PRMT1, which is recruited by BMPR2, initiates BMP-Induced signaling and induces dissociation from the BMPR1B receptor at the cell surface leading to derepress downstream Smad1/Smad5 signaling. As to expression, expressed in the brain, heart, ovary, peripheral blood leukocytes, small intestine, spleen, thymus, bone marrow, fetal liver and lymph nodes.

The protein localises to the nucleus. In terms of biological role, transforming growth factor-beta superfamily receptors signaling occurs through the Smad family of intracellular mediators. SMAD6 is an inhibitory Smad (i-Smad) that negatively regulates signaling downstream of type I transforming growth factor-beta. Acts as a mediator of TGF-beta and BMP anti-inflammatory activities. Suppresses IL1R-TLR signaling through its direct interaction with PEL1, preventing NF-kappa-B activation, nuclear transport and NF-kappa-B-mediated expression of pro-inflammatory genes. Blocks the BMP-SMAD1 signaling pathway by competing with SMAD4 for receptor-activated SMAD1-binding. Binds to regulatory elements in target promoter regions. The protein is Mothers against decapentaplegic homolog 6 (SMAD6) of Homo sapiens (Human).